A 267-amino-acid chain; its full sequence is 3-methyl-2-oxobutanoate hydroxymethyltransferase (267 aa).

Mg(2+) is bound by residues Asp-46 and Asp-85. Residues 46–47, Asp-85, and Lys-115 contribute to the 3-methyl-2-oxobutanoate site; that span reads DS. A Mg(2+)-binding site is contributed by Glu-117. The Proton acceptor role is filled by Glu-184.

This sequence belongs to the PanB family. As to quaternary structure, homodecamer; pentamer of dimers. Requires Mg(2+) as cofactor.

Its subcellular location is the cytoplasm. It catalyses the reaction 3-methyl-2-oxobutanoate + (6R)-5,10-methylene-5,6,7,8-tetrahydrofolate + H2O = 2-dehydropantoate + (6S)-5,6,7,8-tetrahydrofolate. It functions in the pathway cofactor biosynthesis; (R)-pantothenate biosynthesis; (R)-pantoate from 3-methyl-2-oxobutanoate: step 1/2. Functionally, catalyzes the reversible reaction in which hydroxymethyl group from 5,10-methylenetetrahydrofolate is transferred onto alpha-ketoisovalerate to form ketopantoate. This Syntrophotalea carbinolica (strain DSM 2380 / NBRC 103641 / GraBd1) (Pelobacter carbinolicus) protein is 3-methyl-2-oxobutanoate hydroxymethyltransferase.